A 169-amino-acid chain; its full sequence is Protein GrpE (169 aa).

The disordered stretch occupies residues 1–25 (MSEEKQNGQIQEETVENSENQNNEL). Polar residues predominate over residues 7-23 (NGQIQEETVENSENQNN).

Belongs to the GrpE family. Homodimer.

Its subcellular location is the cytoplasm. Participates actively in the response to hyperosmotic and heat shock by preventing the aggregation of stress-denatured proteins, in association with DnaK and GrpE. It is the nucleotide exchange factor for DnaK and may function as a thermosensor. Unfolded proteins bind initially to DnaJ; upon interaction with the DnaJ-bound protein, DnaK hydrolyzes its bound ATP, resulting in the formation of a stable complex. GrpE releases ADP from DnaK; ATP binding to DnaK triggers the release of the substrate protein, thus completing the reaction cycle. Several rounds of ATP-dependent interactions between DnaJ, DnaK and GrpE are required for fully efficient folding. In Campylobacter lari (strain RM2100 / D67 / ATCC BAA-1060), this protein is Protein GrpE.